A 137-amino-acid chain; its full sequence is MQYDYGTEDNEVNHIYSENERQKERENECAGPCLYLAPPADVCIFFLFPFVLSPRGGGKEKKKKKVRKVRCASPLLLLHPDITPNTKPRAAVVSNRSTHSSTVCRSLSTMCMFYGYVPIFSAFGIIFCFDNYRSCYC.

Helical transmembrane passes span 36-52 (LAPP…PFVL) and 113-129 (FYGY…IFCF).

The protein resides in the membrane. This is an uncharacterized protein from Saccharomyces cerevisiae (strain ATCC 204508 / S288c) (Baker's yeast).